Reading from the N-terminus, the 470-residue chain is Iron-sulfur cluster assembly protein SufB (470 aa).

The protein belongs to the iron-sulfur cluster assembly SufBD family. As to quaternary structure, component of a complex composed of SufB, SufC and SufD in a stoichiometric ratio of 1:2:1. Interacts with SufC. Interacts with SufD.

The protein operates within cofactor biosynthesis; iron-sulfur cluster biosynthesis. Participates in the sulfur mobilization (SUF) pathway for iron-sulfur (Fe-S) cluster biogenesis. As part of a complex consisting of SufB-SufC(2)-SufD, involved in assembly of [4Fe-4S] clusters. Exhibits ATPase activity. The polypeptide is Iron-sulfur cluster assembly protein SufB (Plasmodium falciparum (isolate 3D7)).